Consider the following 175-residue polypeptide: UPF0398 protein SGO_0588 (175 aa).

It belongs to the UPF0398 family.

In Streptococcus gordonii (strain Challis / ATCC 35105 / BCRC 15272 / CH1 / DL1 / V288), this protein is UPF0398 protein SGO_0588.